Consider the following 229-residue polypeptide: UPF0758 protein CA_C1241 (229 aa).

The MPN domain maps to 107 to 229 (KITSPKEAAN…YISLKEEGLL (123 aa)). Zn(2+) is bound by residues His178, His180, and Asp191. The JAMM motif motif lies at 178 to 191 (HNHPSGDPKPSNED).

This sequence belongs to the UPF0758 family.

This is UPF0758 protein CA_C1241 from Clostridium acetobutylicum (strain ATCC 824 / DSM 792 / JCM 1419 / IAM 19013 / LMG 5710 / NBRC 13948 / NRRL B-527 / VKM B-1787 / 2291 / W).